A 148-amino-acid polypeptide reads, in one-letter code: MATLLVLHGPNLNLLGTREPDKYGATTLAEINQDLERRAREGGHHLLHLQSNAEYELIERIHAAKSEGVDFILINPAAFTHTSVALRDALLAVSIPFIEVHLSNVHKREPFRHHSYFSDVAVGVICGLGASGYRLALEAALEQLTGRA.

The active-site Proton acceptor is tyrosine 23. The substrate site is built by asparagine 75, histidine 81, and aspartate 88. The active-site Proton donor is the histidine 101. Residues 102–103 (LS) and arginine 112 each bind substrate.

Belongs to the type-II 3-dehydroquinase family. Homododecamer.

It catalyses the reaction 3-dehydroquinate = 3-dehydroshikimate + H2O. Its pathway is metabolic intermediate biosynthesis; chorismate biosynthesis; chorismate from D-erythrose 4-phosphate and phosphoenolpyruvate: step 3/7. In terms of biological role, catalyzes a trans-dehydration via an enolate intermediate. The protein is 3-dehydroquinate dehydratase of Ectopseudomonas mendocina (strain ymp) (Pseudomonas mendocina).